The primary structure comprises 443 residues: Glutamyl-tRNA reductase (443 aa).

Residues 49 to 52, Ser-109, 114 to 116, and Gln-120 each bind substrate; these read TCNR and ETQ. Cys-50 (nucleophile) is an active-site residue. 189–194 provides a ligand contact to NADP(+); sequence GAGEMS.

It belongs to the glutamyl-tRNA reductase family. Homodimer.

It catalyses the reaction (S)-4-amino-5-oxopentanoate + tRNA(Glu) + NADP(+) = L-glutamyl-tRNA(Glu) + NADPH + H(+). Its pathway is porphyrin-containing compound metabolism; protoporphyrin-IX biosynthesis; 5-aminolevulinate from L-glutamyl-tRNA(Glu): step 1/2. Its function is as follows. Catalyzes the NADPH-dependent reduction of glutamyl-tRNA(Glu) to glutamate 1-semialdehyde (GSA). This is Glutamyl-tRNA reductase from Desulfitobacterium hafniense (strain DSM 10664 / DCB-2).